Here is a 200-residue protein sequence, read N- to C-terminus: Pyrrolidone-carboxylate peptidase (200 aa).

Active-site residues include Glu-79, Cys-142, and His-166.

The protein belongs to the peptidase C15 family. Homotetramer.

Its subcellular location is the cytoplasm. It catalyses the reaction Release of an N-terminal pyroglutamyl group from a polypeptide, the second amino acid generally not being Pro.. Removes 5-oxoproline from various penultimate amino acid residues except L-proline. The chain is Pyrrolidone-carboxylate peptidase (pcp) from Pyrococcus abyssi (strain GE5 / Orsay).